A 371-amino-acid chain; its full sequence is UDP-N-acetylglucosamine--N-acetylmuramyl-(pentapeptide) pyrophosphoryl-undecaprenol N-acetylglucosamine transferase (371 aa).

Residues 10-12 (TGG), Asn124, Arg165, Ser191, Ile246, and Gln291 each bind UDP-N-acetyl-alpha-D-glucosamine.

This sequence belongs to the glycosyltransferase 28 family. MurG subfamily.

It is found in the cell inner membrane. The catalysed reaction is di-trans,octa-cis-undecaprenyl diphospho-N-acetyl-alpha-D-muramoyl-L-alanyl-D-glutamyl-meso-2,6-diaminopimeloyl-D-alanyl-D-alanine + UDP-N-acetyl-alpha-D-glucosamine = di-trans,octa-cis-undecaprenyl diphospho-[N-acetyl-alpha-D-glucosaminyl-(1-&gt;4)]-N-acetyl-alpha-D-muramoyl-L-alanyl-D-glutamyl-meso-2,6-diaminopimeloyl-D-alanyl-D-alanine + UDP + H(+). Its pathway is cell wall biogenesis; peptidoglycan biosynthesis. Its function is as follows. Cell wall formation. Catalyzes the transfer of a GlcNAc subunit on undecaprenyl-pyrophosphoryl-MurNAc-pentapeptide (lipid intermediate I) to form undecaprenyl-pyrophosphoryl-MurNAc-(pentapeptide)GlcNAc (lipid intermediate II). This is UDP-N-acetylglucosamine--N-acetylmuramyl-(pentapeptide) pyrophosphoryl-undecaprenol N-acetylglucosamine transferase from Geobacter sp. (strain M21).